Reading from the N-terminus, the 1033-residue chain is Potassium-transporting ATPase alpha chain 1 (1033 aa).

Residues 1–96 lie on the Cytoplasmic side of the membrane; it reads MGKENYELYS…NALRPPRGTP (96 aa). Phosphotyrosine is present on residues Tyr-6 and Tyr-9. A disordered region spans residues 14-39; that stretch reads GTGPGGDMAAKMSKKKAGGGGGKKKE. Basic residues predominate over residues 25–38; sequence MSKKKAGGGGGKKK. Ser-26 carries the post-translational modification Phosphoserine. Residues 97–117 traverse the membrane as a helical segment; that stretch reads EYVKFARQLAGGLQCLMWVAA. Residues 118-140 lie on the Lumenal side of the membrane; it reads AICLIAFAIQASEGDLTTDDNLY. The helical transmembrane segment at 141–161 threads the bilayer; sequence LALALIAVVVVTGCFGYYQEF. Residues 162–297 lie on the Cytoplasmic side of the membrane; it reads KSTNIIASFK…NEKTPIAIEI (136 aa). The chain crosses the membrane as a helical span at residues 298–317; it reads EHFVDIIAGLAILFGATFFV. Residues 318-329 are Lumenal-facing; that stretch reads VAMCIGYTFLRA. Residues 330 to 347 form a helical membrane-spanning segment; it reads MVFFMAIVVAYVPEGLLA. Val-338, Ala-339, Val-341, and Glu-343 together coordinate K(+). The Cytoplasmic portion of the chain corresponds to 348–781; the sequence is TVTVCLSLTA…EQGRLIFDNL (434 aa). The 4-aspartylphosphate intermediate role is filled by Asp-385. Mg(2+) is bound by residues Asp-385 and Thr-387. Ser-461 and Ser-599 each carry phosphoserine. Mg(2+) is bound by residues Asp-726 and Asp-730. Residues 782 to 801 traverse the membrane as a helical segment; the sequence is KKSIAYTLTKNIPELTPYLI. Glu-795 contributes to the K(+) binding site. The Lumenal portion of the chain corresponds to 802 to 811; that stretch reads YITVSVPLPL. Residues 812–832 form a helical membrane-spanning segment; that stretch reads GCITILFIELCTDIFPSVSLA. Glu-820 provides a ligand contact to K(+). At 833-852 the chain is on the cytoplasmic side; the sequence is YEKAESDIMHLRPRNPRRDR. The residue at position 838 (Ser-838) is a Phosphoserine. Residues 853–875 traverse the membrane as a helical segment; it reads LVNEPLAAYSYFQIGAIQSFAGF. The Lumenal portion of the chain corresponds to 876-927; that stretch reads ADYFTAMAQEGWFPLLCVGLRPQWEDHHLQDLQDSYGQEWTFGQRLYQQYTC. Residues 928 to 947 form a helical membrane-spanning segment; the sequence is YTVFFISIEMCQIADVLIRK. The Cytoplasmic portion of the chain corresponds to 948–961; it reads TRRLSAFQQGFFRN. The residue at position 952 (Ser-952) is a Phosphoserine; by PKA. A helical membrane pass occupies residues 962 to 980; that stretch reads RILVIAIVFQVCIGCFLCY. At 981 to 995 the chain is on the lumenal side; the sequence is CPGMPNIFNFMPIRF. Residues 996-1016 traverse the membrane as a helical segment; that stretch reads QWWLVPMPFGLLIFVYDEIRK. The Cytoplasmic portion of the chain corresponds to 1017-1033; sequence LGVRCCPGSWWDQELYY.

Belongs to the cation transport ATPase (P-type) (TC 3.A.3) family. Type IIC subfamily. As to quaternary structure, the gastric H(+)/K(+) ATPase pump is composed of the catalytic alpha subunit ATP4A and the regulatory beta subunit ATP4B. Interacts (via the P-domain) with ATP4B (via N-terminus); this interaction stabilizes the lumenal-open E2 conformation state and prevents the reverse reaction of the transport cycle.

It localises to the apical cell membrane. The enzyme catalyses K(+)(out) + ATP + H2O + H(+)(in) = K(+)(in) + ADP + phosphate + 2 H(+)(out). Its function is as follows. The catalytic subunit of the gastric H(+)/K(+) ATPase pump which transports H(+) ions in exchange for K(+) ions across the apical membrane of parietal cells. Uses ATP as an energy source to pump H(+) ions to the gastric lumen while transporting K(+) ion from the lumen into the cell. Remarkably generates a million-fold proton gradient across the gastric parietal cell membrane, acidifying the gastric juice down to pH 1. Within a transport cycle, the transfer of a H(+) ion across the membrane is coupled to ATP hydrolysis and is associated with a transient phosphorylation that shifts the pump conformation from inward-facing (E1) to outward-facing state (E2). The release of the H(+) ion in the stomach lumen is followed by binding of K(+) ion converting the pump conformation back to the E1 state. In Rattus norvegicus (Rat), this protein is Potassium-transporting ATPase alpha chain 1 (Atp4a).